Here is a 325-residue protein sequence, read N- to C-terminus: S-adenosylmethionine carrier 1, chloroplastic/mitochondrial (325 aa).

Residues 1–38 constitute a chloroplast and mitochondrion transit peptide; that stretch reads MAPLTLSVDVKSSSATSHDVSKRVMQSSQLKINKGFFA. 3 Solcar repeats span residues 52 to 124, 133 to 215, and 228 to 310; these read RTLF…TKQK, LSAV…LCLG, and ENAL…TKRT. 5 helical membrane-spanning segments follow: residues 55–75, 97–117, 132–152, 230–250, and 285–305; these read FEGFIAGGTAGVVVETALYPI, YSGLAGNIAGVLPASALFVGV, HLSAVAHLTAGAIGGLAASLI, ALIGAFAGALTGAVTTPLDVI, and GIGPRVLWIGIGGSIFFGVLE.

Belongs to the mitochondrial carrier (TC 2.A.29) family. As to expression, expressed in seedlings, cotyledons, leaves and flowers. Lower levels of expression in stems and roots. Not detected in senescent leaves, petals and pollen grains.

The protein resides in the mitochondrion membrane. It is found in the plastid. The protein localises to the chloroplast membrane. With respect to regulation, inhibited strongly by tannic acid, bromocresol purple, mercuric chloride, mersalyl, p-hydroxymercuribenzoate, S-adenosylhomocysteine, S-adenosylcysteine and adenosylornithine, and to a lesser extent by N-ethylmaleimide, bathophenanthroline and pyridoxal-5'-P. In terms of biological role, transporter involved in exchange reactions through membranes. Has a low uniporter activity. Specifically mediates the transport of S-adenosylmethionine (SAM) and its closest analogs. Probably involved in the uptake of SAM in exchange for S-adenosylhomocysteine (SAHC), which is produced from SAM in the mitochondrial matrix and plastidial stroma by methyltransferase activities. In Arabidopsis thaliana (Mouse-ear cress), this protein is S-adenosylmethionine carrier 1, chloroplastic/mitochondrial (SAMC1).